Reading from the N-terminus, the 373-residue chain is Muscleblind-like protein 2 (373 aa).

4 consecutive C3H1-type zinc fingers follow at residues 13–41 (WLTL…HPPK), 47–73 (NGRV…HPPT), 176–204 (TDKL…HPAD), and 212–238 (DNTV…HPPA).

The protein belongs to the muscleblind family. As to quaternary structure, interacts with ITGA3. Expressed in heart, brain, placenta, lung, liver, skeletal muscle, kidney and pancreas.

The protein resides in the nucleus. It is found in the cytoplasm. Functionally, mediates pre-mRNA alternative splicing regulation. Acts either as activator or repressor of splicing on specific pre-mRNA targets. Inhibits cardiac troponin-T (TNNT2) pre-mRNA exon inclusion but induces insulin receptor (IR) pre-mRNA exon inclusion in muscle. Antagonizes the alternative splicing activity pattern of CELF proteins. RNA-binding protein that binds to 5'ACACCC-3' core sequence, termed zipcode, within the 3'UTR of ITGA3. Binds to CUG triplet repeat expansion in myotonic dystrophy muscle cells by sequestering the target RNAs. Together with RNA binding proteins RBPMS and RBFOX2, activates vascular smooth muscle cells alternative splicing events. Regulates NCOR2 alternative splicing. Seems to regulate expression and localization of ITGA3 by transporting it from the nucleus to cytoplasm at adhesion plaques. May play a role in myotonic dystrophy pathophysiology (DM). The chain is Muscleblind-like protein 2 (MBNL2) from Homo sapiens (Human).